A 188-amino-acid chain; its full sequence is dCTP deaminase (188 aa).

Residues 111-116 (KSTYAR), 135-137 (TLE), Q156, Y170, and Q180 contribute to the dCTP site. The Proton donor/acceptor role is filled by E137.

Belongs to the dCTP deaminase family. Homotrimer.

It catalyses the reaction dCTP + H2O + H(+) = dUTP + NH4(+). It functions in the pathway pyrimidine metabolism; dUMP biosynthesis; dUMP from dCTP (dUTP route): step 1/2. Its function is as follows. Catalyzes the deamination of dCTP to dUTP. This Dichelobacter nodosus (strain VCS1703A) protein is dCTP deaminase.